Reading from the N-terminus, the 651-residue chain is MNLTFYIFFLSLLPSFSSSKPMNCSDTTRLCSSFLAFKPNQNQSFSVIQSMFDVLPQDITADISGGYFFIKKNCSCLTTTHQYTTNTTFTIRQNVGYVYNVTVSAYSGLAFPPNTTRAARAGAVVSVQLLCGCSSGLWNYLMSYVAMAGDSVQSLSSRFGVSMDRIEDVNGILNLDNITAGDLLYIPLDSVPGEPYETSKINPPAPSPAPASSLANGNISDDQVNHTAKSGSHVPYIWIVGGLGVVLALLVLCILVCICLRSSSCSSSEEDGNGHNFQILRKSGFFCGSGRYNCCRSGDFRQTNGETQVVAIPKALGDGMFEIEKPMVFTYEEIRAATDEFSDSNLLGHGNYGSVYFGLLREQEVAVKRMTATKTKEFAAEMKVLCKVHHSNLVELIGYAATVDELFVVYEYVRKGMLKSHLHDPQSKGNTPLSWIMRNQIALDAARGLEYIHEHTKTHYVHRDIKTSNILLDEAFRAKISDFGLAKLVEKTGEGEISVTKVVGTYGYLAPEYLSDGLATSKSDIYAFGVVLFEIISGREAVIRTEAIGTKNPERRPLASIMLAVLKNSPDSMNMSSLKEFVDPNMMDLYPHDCLFKIATLAKQCVDDDPILRPNMKQVVISLSQILLSSIEWEATLAGNSQVFSGLVQGR.

The N-terminal stretch at 1-19 (MNLTFYIFFLSLLPSFSSS) is a signal peptide. Asn-2, Asn-23, Asn-42, Asn-73, Asn-86, Asn-100, Asn-114, and Asn-177 each carry an N-linked (GlcNAc...) asparagine glycan. Over 20–236 (KPMNCSDTTR…TAKSGSHVPY (217 aa)) the chain is Extracellular. 3 disulfide bridges follow: Cys-24-Cys-76, Cys-31-Cys-133, and Cys-74-Cys-131. One can recognise a LysM domain in the interval 142–186 (MSYVAMAGDSVQSLSSRFGVSMDRIEDVNGILNLDNITAGDLLYI). The disordered stretch occupies residues 196–216 (YETSKINPPAPSPAPASSLAN). Residues Asn-218 and Asn-225 are each glycosylated (N-linked (GlcNAc...) asparagine). A helical membrane pass occupies residues 237–257 (IWIVGGLGVVLALLVLCILVC). Over 258–651 (ICLRSSSCSS…QVFSGLVQGR (394 aa)) the chain is Cytoplasmic. Thr-330 is subject to Phosphothreonine. The Protein kinase domain maps to 341–628 (FSDSNLLGHG…VVISLSQILL (288 aa)). Residues 347–355 (LGHGNYGSV) and Lys-368 contribute to the ATP site. Tyr-410 is subject to Phosphotyrosine. The active-site Proton acceptor is Asp-464. Position 468 is a phosphoserine (Ser-468). Thr-500 and Thr-505 each carry phosphothreonine. Tyr-513 bears the Phosphotyrosine mark.

It belongs to the protein kinase superfamily. Ser/Thr protein kinase family.

It is found in the cell membrane. Functionally, putative Lysin motif (LysM) receptor kinase that may recognize microbe-derived N-acetylglucosamine (NAG)-containing ligands. This Arabidopsis thaliana (Mouse-ear cress) protein is LysM domain receptor-like kinase 3 (LYK3).